The chain runs to 634 residues: Endoribonuclease rege-1 (634 aa).

3 disordered regions span residues 1 to 33, 90 to 113, and 156 to 223; these read MDST…STPH, SHPS…APMI, and KMGL…NPDP. Residues 97 to 106 are compositionally biased toward basic and acidic residues; the sequence is ESSDPSKIDD. 2 stretches are compositionally biased toward low complexity: residues 182–194 and 201–217; these read SSAS…SSSS and SVSI…STPS. An RNase NYN domain is found at 225–377; the sequence is LRAVVVDGSN…PSGRHGPRIE (153 aa). Position 314 (D314) interacts with Mg(2+). The C3H1-type zinc-finger motif lies at 387–412; it reads SSNPLVCPYARKCTYGNKCKFYHPER.

The protein belongs to the ZC3H12 family. Requires Mg(2+) as cofactor. In terms of tissue distribution, expressed in the intestinal cells adjacent to the pharynx.

It localises to the cytoplasm. Functionally, endonuclease which binds to the 3'UTR of target mRNAs and induces degradation of the transcript. Acts together with rle-1 to repress the expression of the transcription factor ets-4 by binding to the conserved ADE (alternate decay element) and RCE (REGE-1 cleavage element) stem loop structure in its 3'UTR, which controls the expression of genes in the IIS and TORC1 pathways, including those involved in lipid metabolism and autophagosome formation. May play a role in the clearance of apoptotic cell corpses. The polypeptide is Endoribonuclease rege-1 (Caenorhabditis elegans).